Here is a 101-residue protein sequence, read N- to C-terminus: Small ribosomal subunit protein uS14 (101 aa).

Belongs to the universal ribosomal protein uS14 family. In terms of assembly, part of the 30S ribosomal subunit. Contacts proteins S3 and S10.

Binds 16S rRNA, required for the assembly of 30S particles and may also be responsible for determining the conformation of the 16S rRNA at the A site. This is Small ribosomal subunit protein uS14 from Cupriavidus necator (strain ATCC 17699 / DSM 428 / KCTC 22496 / NCIMB 10442 / H16 / Stanier 337) (Ralstonia eutropha).